We begin with the raw amino-acid sequence, 229 residues long: Large ribosomal subunit protein uL1 (229 aa).

This sequence belongs to the universal ribosomal protein uL1 family. In terms of assembly, part of the 50S ribosomal subunit.

Functionally, binds directly to 23S rRNA. The L1 stalk is quite mobile in the ribosome, and is involved in E site tRNA release. In terms of biological role, protein L1 is also a translational repressor protein, it controls the translation of the L11 operon by binding to its mRNA. This Streptococcus pneumoniae (strain JJA) protein is Large ribosomal subunit protein uL1.